The following is a 165-amino-acid chain: LOB domain-containing protein 3 (165 aa).

Positions 13 to 115 (SPCAGCKLLR…TQLAFAQAEL (103 aa)) constitute an LOB domain.

It belongs to the LOB domain-containing protein family. In terms of tissue distribution, expressed in young shoots, roots, stems, leaves and flowers. At the bases of lateral organs formed from vegetative, inflorescence, and floral meristems.

The protein resides in the nucleus. This chain is LOB domain-containing protein 3 (LBD3), found in Arabidopsis thaliana (Mouse-ear cress).